A 554-amino-acid chain; its full sequence is MNQLCVERNLSISTAYIKSKPKKYIERIKKKKSSNKSIKSQHKFEGSKIANKNNELKDIKSKDPKHYENHINKNTKHKDILLKSKRSDNFKFSRRGFILSFTGNLEDFYNLSEEPLGKGTYGCVYKATDKLLKIQRAVKVVSKKKLKNIPRFRQEIDIMKNLDHPNVIKLLETFEDEEQIYLIMDLCTGGELFDKIIKKGSFVEMYASFIMKQIFSVLNYLHIRNICHRDIKPENFLFYDKSTESLIKIIDFGLAAYFNDIDYEMKTKAGTPYYVAPQVLTGCYDYKCDLWSAGVLFYIILCGYPPFYGESDHEILSMVKKGKYNFKGKEWNNISEEAKDLIKRCLTIDSGKRINASEALKHPWFKKKKGSFNLDVKMDIHVLENFKNYALLLKLQKLAMTIIAQQSNDYDLQQLKTVFLYLDEDGKGNITKNQLKKGLENSGLKLPQNFDVLLDQIDSDGSGRIDYTEFLAAALDRKHLSKKLIYCAFRVFDVDNDGEITTAELAHILYNGNKKGSITQKDVNQVKKMIQEVDKNNDGKIDFYEFCEMMKLKY.

The segment at 30-55 (KKKSSNKSIKSQHKFEGSKIANKNNE) is disordered. Positions 110–365 (NLSEEPLGKG…ASEALKHPWF (256 aa)) constitute a Protein kinase domain. ATP-binding positions include 116 to 124 (LGKGTYGCV) and Lys139. The active-site Proton acceptor is Asp230. The short motif at 385–393 (NFKNYALLL) is the J domain autoinhibitory motif element. The j domain stretch occupies residues 385–420 (NFKNYALLLKLQKLAMTIIAQQSNDYDLQQLKTVFL). The J domain EF-hand interaction motif signature appears at 394–403 (KLQKLAMTII). EF-hand domains follow at residues 410 to 445 (YDLQ…SGLK), 448 to 479 (QNFD…DRKH), 480 to 515 (LSKK…GNKK), and 521 to 554 (KDVN…KLKY). Residues Asp458, Asp460, Ser462, Arg464, Glu469, Asp493, Asp495, Asp497, Glu499, Glu504, Asp534, Asn536, Asp538, Lys540, and Glu545 each coordinate Ca(2+).

This sequence belongs to the protein kinase superfamily. Ser/Thr protein kinase family. CDPK subfamily. The cofactor is Mg(2+).

Its subcellular location is the cytoplasm. The catalysed reaction is L-seryl-[protein] + ATP = O-phospho-L-seryl-[protein] + ADP + H(+). It catalyses the reaction L-threonyl-[protein] + ATP = O-phospho-L-threonyl-[protein] + ADP + H(+). With respect to regulation, activated by calcium. Upon calcium binding to the EF-hand domain 2, the C-terminus of the junction domain (J domain) undergoes a conformational change which results in the dissociation of the pseudo-substrate inhibitory motif from the catalytic domain. This, in turn, may facilitate the autophosphorylation of the activation loop at Thr-271, which leads to the kinase activation. Functionally, calcium-dependent protein kinase which acts as a sensor and effector of intracellular Ca(2+) levels probably in part downstream of cGMP-activated PKG kinase. In the mosquito midgut, regulates the gliding motility of the ookinete which is essential for the ookinete to invade the midgut epithelium. However, another study showed that while required for ookinete invasion of the midgut epithelium, is not required for ookinete gliding motility. This Plasmodium berghei (strain Anka) protein is Calcium-dependent protein kinase 3.